Reading from the N-terminus, the 45-residue chain is Psychimicin (45 aa).

3 disulfides stabilise this stretch: cysteine 10/cysteine 24, cysteine 14/cysteine 36, and cysteine 25/cysteine 42.

In terms of assembly, monomer. As to expression, hemolymph.

Its subcellular location is the secreted. Its function is as follows. Has antimicrobial activity. Is particularly active against fungi, and to a lesser extent against Gram-positive and Gram-negative bacteria. This Oiketicus kirbyi (Bagworm moth) protein is Psychimicin.